A 617-amino-acid polypeptide reads, in one-letter code: Zinc finger protein 221 (617 aa).

Residues 30-100 enclose the KRAB domain; it reads VTFKDVAVVF…KTTSQREGNS (71 aa). 3 C2H2-type zinc fingers span residues 170–192, 198–220, and 226–248; these read YRCN…QQSH, HTCG…QRVH, and YKCD…QRVH. Residues 254 to 276 form a C2H2-type 4; degenerate zinc finger; the sequence is FKCGQCGKGFHSRSALNVHCKLH. C2H2-type zinc fingers lie at residues 282 to 304, 310 to 332, 338 to 360, 366 to 388, 394 to 416, 422 to 444, 450 to 472, 478 to 500, 506 to 528, 534 to 556, and 562 to 584; these read YNCE…QRIH, FKCD…SMVH, FRCD…SMVH, YKCE…QMVH, YNCK…QQVH, FKCE…QRSH, YNCE…QRVH, YNCK…QRLH, FKCE…QTCH, and YKCE…QRVH.

It belongs to the krueppel C2H2-type zinc-finger protein family.

Its subcellular location is the nucleus. Functionally, may be involved in transcriptional regulation. The sequence is that of Zinc finger protein 221 (ZNF221) from Homo sapiens (Human).